Reading from the N-terminus, the 686-residue chain is WD repeat-containing protein 93 (686 aa).

Over residues 1-10 (MSFPRGSQTQ) the composition is skewed to polar residues. The segment at 1 to 40 (MSFPRGSQTQKIKHPIGTRKGPLEVPPPTEKDWPKDDEQD) is disordered. The span at 29–40 (TEKDWPKDDEQD) shows a compositional bias: basic and acidic residues. Residues 410-449 (PCAAPIAVSQLSCSSSYLVLACEDGVLTLWDLAKGFPLGV) form a WD repeat.

This chain is WD repeat-containing protein 93 (WDR93), found in Homo sapiens (Human).